The chain runs to 207 residues: Peptidyl-tRNA hydrolase (207 aa).

Residue Tyr-17 participates in tRNA binding. His-22 (proton acceptor) is an active-site residue. Residues Phe-68, Asn-70, and Asn-116 each contribute to the tRNA site.

It belongs to the PTH family. Monomer.

The protein resides in the cytoplasm. It catalyses the reaction an N-acyl-L-alpha-aminoacyl-tRNA + H2O = an N-acyl-L-amino acid + a tRNA + H(+). Functionally, hydrolyzes ribosome-free peptidyl-tRNAs (with 1 or more amino acids incorporated), which drop off the ribosome during protein synthesis, or as a result of ribosome stalling. Catalyzes the release of premature peptidyl moieties from peptidyl-tRNA molecules trapped in stalled 50S ribosomal subunits, and thus maintains levels of free tRNAs and 50S ribosomes. The chain is Peptidyl-tRNA hydrolase from Buchnera aphidicola subsp. Baizongia pistaciae (strain Bp).